A 361-amino-acid polypeptide reads, in one-letter code: Chorismate synthase (361 aa).

2 residues coordinate NADP(+): R48 and R54. FMN contacts are provided by residues R125 to S127, N238 to A239, G278, K293 to S297, and R319.

The protein belongs to the chorismate synthase family. Homotetramer. FMNH2 serves as cofactor.

It carries out the reaction 5-O-(1-carboxyvinyl)-3-phosphoshikimate = chorismate + phosphate. It participates in metabolic intermediate biosynthesis; chorismate biosynthesis; chorismate from D-erythrose 4-phosphate and phosphoenolpyruvate: step 7/7. Its function is as follows. Catalyzes the anti-1,4-elimination of the C-3 phosphate and the C-6 proR hydrogen from 5-enolpyruvylshikimate-3-phosphate (EPSP) to yield chorismate, which is the branch point compound that serves as the starting substrate for the three terminal pathways of aromatic amino acid biosynthesis. This reaction introduces a second double bond into the aromatic ring system. In Vibrio cholerae serotype O1 (strain ATCC 39541 / Classical Ogawa 395 / O395), this protein is Chorismate synthase.